The primary structure comprises 176 residues: F(420)H(2) dehydrogenase subunit J (176 aa).

Helical transmembrane passes span 13 to 33 (TAVFGLLALVTVFFAIFVVIA), 39 to 59 (AGLALIMCMFGVAGLYILLNA), 64 to 84 (VIQVLVYIGAIGVLILFAVML), 99 to 119 (PLAFLVCLLFVAVVVTGAFGT), and 140 to 160 (IGMLIFTHFVAPFEVLSIVLL).

It belongs to the complex I subunit 6 family. The FPO complex is composed of at least 13 different subunits. FpoA, FpoH, FpoJ, FpoK, FpoL, FpoM and FpoN proteins constitute the membrane sector of the complex.

It is found in the cell membrane. It catalyses the reaction methanophenazine + reduced coenzyme F420-(gamma-L-Glu)(n) = dihydromethanophenazine + oxidized coenzyme F420-(gamma-L-Glu)(n) + H(+). In terms of biological role, component of the F(420)H(2) dehydrogenase (FPO complex) which is part of the energy-conserving F(420)H(2):heterodisulfide oxidoreductase system. The membrane-bound electron transfer system of the complex plays an important role in the metabolism of methylotrophic methanogens when the organisms grow on methanol or methylamines. Catalyzes the oxidation of methanophenazine to dihydromethanophenazine. It shuttles electrons from F(420)H(2), via FAD and iron-sulfur (Fe-S) centers, to methanophenazine (an electron carrier in the membrane). It couples the redox reaction to proton translocation (for every two electrons transferred, two hydrogen ions are translocated across the cytoplasmic membrane), and thus conserves the redox energy in a proton gradient. It also catalyzes the oxidation of F(420)H(2) with quinones such as 2,3-dimethyl-1,4-naphthoquinone, 2-methyl-1,4-naphthoquinone and tetramethyl-p-benzoquinone. In Methanosarcina mazei (strain ATCC BAA-159 / DSM 3647 / Goe1 / Go1 / JCM 11833 / OCM 88) (Methanosarcina frisia), this protein is F(420)H(2) dehydrogenase subunit J (fpoJ).